A 523-amino-acid polypeptide reads, in one-letter code: 2-isopropylmalate synthase (523 aa).

One can recognise a Pyruvate carboxyltransferase domain in the interval 5-267; it reads VIIFDTTLRD…HTAINHQEIW (263 aa). Mn(2+) contacts are provided by aspartate 14, histidine 202, histidine 204, and asparagine 238. The regulatory domain stretch occupies residues 392–523; it reads RLDYFSVQSG…QHNENNKETV (132 aa).

Belongs to the alpha-IPM synthase/homocitrate synthase family. LeuA type 1 subfamily. In terms of assembly, homodimer. The cofactor is Mn(2+).

Its subcellular location is the cytoplasm. The catalysed reaction is 3-methyl-2-oxobutanoate + acetyl-CoA + H2O = (2S)-2-isopropylmalate + CoA + H(+). It functions in the pathway amino-acid biosynthesis; L-leucine biosynthesis; L-leucine from 3-methyl-2-oxobutanoate: step 1/4. Its function is as follows. Catalyzes the condensation of the acetyl group of acetyl-CoA with 3-methyl-2-oxobutanoate (2-ketoisovalerate) to form 3-carboxy-3-hydroxy-4-methylpentanoate (2-isopropylmalate). The polypeptide is 2-isopropylmalate synthase (Shigella sonnei (strain Ss046)).